Reading from the N-terminus, the 158-residue chain is NAD(P)H-quinone oxidoreductase subunit J, chloroplastic (158 aa).

This sequence belongs to the complex I 30 kDa subunit family. NDH is composed of at least 16 different subunits, 5 of which are encoded in the nucleus.

Its subcellular location is the plastid. The protein localises to the chloroplast thylakoid membrane. The catalysed reaction is a plastoquinone + NADH + (n+1) H(+)(in) = a plastoquinol + NAD(+) + n H(+)(out). It catalyses the reaction a plastoquinone + NADPH + (n+1) H(+)(in) = a plastoquinol + NADP(+) + n H(+)(out). Its function is as follows. NDH shuttles electrons from NAD(P)H:plastoquinone, via FMN and iron-sulfur (Fe-S) centers, to quinones in the photosynthetic chain and possibly in a chloroplast respiratory chain. The immediate electron acceptor for the enzyme in this species is believed to be plastoquinone. Couples the redox reaction to proton translocation, and thus conserves the redox energy in a proton gradient. The protein is NAD(P)H-quinone oxidoreductase subunit J, chloroplastic of Panax ginseng (Korean ginseng).